The following is a 271-amino-acid chain: Mannosyl-3-phosphoglycerate phosphatase (271 aa).

Catalysis depends on D13, which acts as the Nucleophile. Positions 13, 15, and 214 each coordinate Mg(2+).

The protein belongs to the HAD-like hydrolase superfamily. MPGP family. Mg(2+) is required as a cofactor.

It localises to the cytoplasm. It catalyses the reaction 2-O-(alpha-D-mannosyl)-3-phosphoglycerate + H2O = (2R)-2-O-(alpha-D-mannosyl)-glycerate + phosphate. This Salmonella choleraesuis (strain SC-B67) protein is Mannosyl-3-phosphoglycerate phosphatase (yedP).